The sequence spans 224 residues: Deoxyribose-phosphate aldolase (224 aa).

The active-site Proton donor/acceptor is the D92. K154 (schiff-base intermediate with acetaldehyde) is an active-site residue. The Proton donor/acceptor role is filled by K183.

It belongs to the DeoC/FbaB aldolase family. DeoC type 1 subfamily.

The protein localises to the cytoplasm. The catalysed reaction is 2-deoxy-D-ribose 5-phosphate = D-glyceraldehyde 3-phosphate + acetaldehyde. It participates in carbohydrate degradation; 2-deoxy-D-ribose 1-phosphate degradation; D-glyceraldehyde 3-phosphate and acetaldehyde from 2-deoxy-alpha-D-ribose 1-phosphate: step 2/2. Functionally, catalyzes a reversible aldol reaction between acetaldehyde and D-glyceraldehyde 3-phosphate to generate 2-deoxy-D-ribose 5-phosphate. This is Deoxyribose-phosphate aldolase from Actinobacillus succinogenes (strain ATCC 55618 / DSM 22257 / CCUG 43843 / 130Z).